Consider the following 102-residue polypeptide: Large ribosomal subunit protein bL21 (102 aa).

This sequence belongs to the bacterial ribosomal protein bL21 family. As to quaternary structure, part of the 50S ribosomal subunit. Contacts protein L20.

Its function is as follows. This protein binds to 23S rRNA in the presence of protein L20. The chain is Large ribosomal subunit protein bL21 from Bacillus anthracis (strain A0248).